A 312-amino-acid chain; its full sequence is Glycerol-3-phosphate dehydrogenase [NAD(P)+] (312 aa).

NADPH is bound by residues Trp11, Arg30, Arg31, and Lys95. Positions 95, 123, and 125 each coordinate sn-glycerol 3-phosphate. NADPH is bound at residue Ala127. Sn-glycerol 3-phosphate is bound by residues Lys177, Asp230, Ser240, Arg241, and Asn242. The active-site Proton acceptor is Lys177. Residue Arg241 coordinates NADPH. NADPH contacts are provided by Val265 and Glu267.

The protein belongs to the NAD-dependent glycerol-3-phosphate dehydrogenase family.

The protein localises to the cytoplasm. It carries out the reaction sn-glycerol 3-phosphate + NAD(+) = dihydroxyacetone phosphate + NADH + H(+). The enzyme catalyses sn-glycerol 3-phosphate + NADP(+) = dihydroxyacetone phosphate + NADPH + H(+). It functions in the pathway membrane lipid metabolism; glycerophospholipid metabolism. Functionally, catalyzes the reduction of the glycolytic intermediate dihydroxyacetone phosphate (DHAP) to sn-glycerol 3-phosphate (G3P), the key precursor for phospholipid synthesis. The chain is Glycerol-3-phosphate dehydrogenase [NAD(P)+] from Helicobacter acinonychis (strain Sheeba).